The chain runs to 228 residues: Isonitrile hydratase (228 aa).

Cys-101 is an active-site residue.

Homodimer.

It carries out the reaction N-cyclohexylformamide = cyclohexyl isocyanide + H2O. Its activity is regulated as follows. Sensitive to thiol reagents and oxidizing reagents, but is not influenced by chelators or reducing reagents. Its function is as follows. Catalyzes the hydration of cyclohexyl isocyanide to N-cyclohexylformamide. Acts on various isonitriles, but not on nitriles or amides. Probably involved in detoxification. The polypeptide is Isonitrile hydratase (inhA) (Pseudomonas putida (Arthrobacter siderocapsulatus)).